The following is a 330-amino-acid chain: ADP-L-glycero-D-manno-heptose-6-epimerase (330 aa).

Residues 11 to 12 (FI), 32 to 33 (DN), Lys39, Lys54, 75 to 79 (EGACS), and Asn92 contribute to the NADP(+) site. Tyr139 acts as the Proton acceptor in catalysis. Lys143 lines the NADP(+) pocket. Asn168 contacts substrate. 2 residues coordinate NADP(+): Val169 and Lys177. Catalysis depends on Lys177, which acts as the Proton acceptor. Substrate contacts are provided by residues Arg179, His186, 200–203 (FGEY), Arg213, and Tyr292.

Belongs to the NAD(P)-dependent epimerase/dehydratase family. HldD subfamily. In terms of assembly, homopentamer. NADP(+) serves as cofactor.

The enzyme catalyses ADP-D-glycero-beta-D-manno-heptose = ADP-L-glycero-beta-D-manno-heptose. It participates in nucleotide-sugar biosynthesis; ADP-L-glycero-beta-D-manno-heptose biosynthesis; ADP-L-glycero-beta-D-manno-heptose from D-glycero-beta-D-manno-heptose 7-phosphate: step 4/4. Catalyzes the interconversion between ADP-D-glycero-beta-D-manno-heptose and ADP-L-glycero-beta-D-manno-heptose via an epimerization at carbon 6 of the heptose. The protein is ADP-L-glycero-D-manno-heptose-6-epimerase of Burkholderia multivorans (strain ATCC 17616 / 249).